A 1216-amino-acid chain; its full sequence is 1-phosphatidylinositol 4,5-bisphosphate phosphodiesterase beta-1 (1216 aa).

The S-palmitoyl cysteine moiety is linked to residue cysteine 17. Serine 236 is subject to Phosphoserine. In terms of domain architecture, PI-PLC X-box spans 316–467 (EDMSQPLSHY…LMYKILVKNK (152 aa)). Active-site residues include histidine 331 and histidine 378. Serine 417 is modified (phosphoserine). The interval 469 to 534 (KSHKSSEGSG…MDEGTAGSEA (66 aa)) is disordered. Residues 472-483 (KSSEGSGKKKLS) are compositionally biased toward basic and acidic residues. Positions 491-501 (SDSSSVFEPSS) are enriched in low complexity. The span at 507–518 (ADTESDDDDDDD) shows a compositional bias: acidic residues. Position 509 is a phosphothreonine (threonine 509). Phosphoserine is present on residues serine 511 and serine 582. Residues 540–656 (MSNLVNYIQP…GYRLKPEFMR (117 aa)) enclose the PI-PLC Y-box domain. A C2 domain is found at 656-786 (RRPDKHFDPF…RNERNQPLTL (131 aa)). 4 disordered regions span residues 834–891 (DEEE…VKAP), 967–989 (EKSA…GSSA), 1072–1095 (MDKK…EEEK), and 1173–1216 (ISED…DTPL). Residues 846–868 (ETSSEAPSETRTTPAENGVNHTA) show a composition bias toward polar residues. The residue at position 887 (serine 887) is a Phosphoserine; by PKC. The segment covering 967 to 979 (EKSAKKDSKKKSE) has biased composition (basic and acidic residues). Phosphoserine occurs at positions 978 and 987. Residues 1075 to 1095 (KRQEKITEAKSKDKSQMEEEK) are compositionally biased toward basic and acidic residues. Phosphoserine is present on residues serine 1197, serine 1199, and serine 1200. Residues 1205–1216 (RENPGREFDTPL) show a composition bias toward basic and acidic residues.

In terms of assembly, interacts with DGKQ. It depends on Ca(2+) as a cofactor. Palmitoylated. Palmitoylation at Cys-17 by ZDHHC21 regulates the signaling activity of PLCB1 and the function of the endothelial barrier. Palmitoylation by ZDHHC21 is stimulated by inflammation.

Its subcellular location is the nucleus membrane. It localises to the cytoplasm. It carries out the reaction a 1,2-diacyl-sn-glycero-3-phospho-(1D-myo-inositol-4,5-bisphosphate) + H2O = 1D-myo-inositol 1,4,5-trisphosphate + a 1,2-diacyl-sn-glycerol + H(+). The catalysed reaction is a 1,2-diacyl-sn-glycero-3-phospho-(1D-myo-inositol) + H2O = 1D-myo-inositol 1-phosphate + a 1,2-diacyl-sn-glycerol + H(+). Functionally, catalyzes the hydrolysis of 1-phosphatidylinositol 4,5-bisphosphate into diacylglycerol (DAG) and inositol 1,4,5-trisphosphate (IP3) and mediates intracellular signaling downstream of G protein-coupled receptors. Regulates the function of the endothelial barrier. This is 1-phosphatidylinositol 4,5-bisphosphate phosphodiesterase beta-1 from Mus musculus (Mouse).